A 72-amino-acid chain; its full sequence is Translation initiation factor IF-1 (72 aa).

An S1-like domain is found at 1–72 (MAKEDNIEMQ…SKGRIVFRSR (72 aa)).

It belongs to the IF-1 family. In terms of assembly, component of the 30S ribosomal translation pre-initiation complex which assembles on the 30S ribosome in the order IF-2 and IF-3, IF-1 and N-formylmethionyl-tRNA(fMet); mRNA recruitment can occur at any time during PIC assembly.

Its subcellular location is the cytoplasm. Its function is as follows. One of the essential components for the initiation of protein synthesis. Stabilizes the binding of IF-2 and IF-3 on the 30S subunit to which N-formylmethionyl-tRNA(fMet) subsequently binds. Helps modulate mRNA selection, yielding the 30S pre-initiation complex (PIC). Upon addition of the 50S ribosomal subunit IF-1, IF-2 and IF-3 are released leaving the mature 70S translation initiation complex. The protein is Translation initiation factor IF-1 of Salmonella paratyphi A (strain ATCC 9150 / SARB42).